We begin with the raw amino-acid sequence, 93 residues long: Small ribosomal subunit protein uS19 (93 aa).

This sequence belongs to the universal ribosomal protein uS19 family.

Functionally, protein S19 forms a complex with S13 that binds strongly to the 16S ribosomal RNA. This is Small ribosomal subunit protein uS19 from Campylobacter jejuni subsp. jejuni serotype O:6 (strain 81116 / NCTC 11828).